A 380-amino-acid polypeptide reads, in one-letter code: DNA replication and repair protein RecF (380 aa).

30 to 37 (GENAQGKT) lines the ATP pocket.

Belongs to the RecF family.

Its subcellular location is the cytoplasm. Its function is as follows. The RecF protein is involved in DNA metabolism; it is required for DNA replication and normal SOS inducibility. RecF binds preferentially to single-stranded, linear DNA. It also seems to bind ATP. This Synechococcus sp. (strain JA-2-3B'a(2-13)) (Cyanobacteria bacterium Yellowstone B-Prime) protein is DNA replication and repair protein RecF.